A 358-amino-acid chain; its full sequence is Histidinol-phosphate aminotransferase (358 aa).

The residue at position 218 (K218) is an N6-(pyridoxal phosphate)lysine.

This sequence belongs to the class-II pyridoxal-phosphate-dependent aminotransferase family. Histidinol-phosphate aminotransferase subfamily. As to quaternary structure, homodimer. Requires pyridoxal 5'-phosphate as cofactor.

It carries out the reaction L-histidinol phosphate + 2-oxoglutarate = 3-(imidazol-4-yl)-2-oxopropyl phosphate + L-glutamate. It participates in amino-acid biosynthesis; L-histidine biosynthesis; L-histidine from 5-phospho-alpha-D-ribose 1-diphosphate: step 7/9. The chain is Histidinol-phosphate aminotransferase from Dehalococcoides mccartyi (strain ATCC BAA-2266 / KCTC 15142 / 195) (Dehalococcoides ethenogenes (strain 195)).